A 145-amino-acid chain; its full sequence is 3-dehydroquinate dehydratase (145 aa).

Tyrosine 23 (proton acceptor) is an active-site residue. Substrate-binding residues include asparagine 75, histidine 81, and aspartate 88. The active-site Proton donor is the histidine 101. Residues 102-103 (LS) and arginine 112 contribute to the substrate site.

Belongs to the type-II 3-dehydroquinase family. Homododecamer.

It catalyses the reaction 3-dehydroquinate = 3-dehydroshikimate + H2O. Its pathway is metabolic intermediate biosynthesis; chorismate biosynthesis; chorismate from D-erythrose 4-phosphate and phosphoenolpyruvate: step 3/7. Functionally, catalyzes a trans-dehydration via an enolate intermediate. The protein is 3-dehydroquinate dehydratase of Legionella pneumophila (strain Paris).